A 343-amino-acid chain; its full sequence is Dihydroorotase (343 aa).

2 residues coordinate Zn(2+): histidine 13 and histidine 15. Substrate is bound by residues 15-17 and asparagine 41; that span reads HLR. Residues lysine 99, histidine 136, and histidine 174 each coordinate Zn(2+). Lysine 99 bears the N6-carboxylysine mark. Residue histidine 136 coordinates substrate. Residue leucine 219 coordinates substrate. Residue aspartate 247 participates in Zn(2+) binding. Residue aspartate 247 is part of the active site. Substrate-binding residues include histidine 251 and alanine 263.

It belongs to the metallo-dependent hydrolases superfamily. DHOase family. Class II DHOase subfamily. In terms of assembly, homodimer. It depends on Zn(2+) as a cofactor.

The catalysed reaction is (S)-dihydroorotate + H2O = N-carbamoyl-L-aspartate + H(+). Its pathway is pyrimidine metabolism; UMP biosynthesis via de novo pathway; (S)-dihydroorotate from bicarbonate: step 3/3. In terms of biological role, catalyzes the reversible cyclization of carbamoyl aspartate to dihydroorotate. In Shewanella baltica (strain OS223), this protein is Dihydroorotase.